Here is a 511-residue protein sequence, read N- to C-terminus: Synaptotagmin-6 (511 aa).

Residues 1 to 59 lie on the Vesicular side of the membrane; it reads MSGVWGAGGPRCQAALAVLASLCRARPPPLGLDVETCQSFELQPPEQSPSAADSGTSVS. Residues 12–38 form a cysteine motif region; that stretch reads CQAALAVLASLCRARPPPLGLDVETCQ. A helical transmembrane segment spans residues 60–80; it reads LLAVVVIVCGVALVAVFFFLF. At 81–511 the chain is on the cytoplasmic side; that stretch reads WKLCWMPWRN…KSFKEGTPRL (431 aa). The span at 93–103 shows a compositional bias: low complexity; the sequence is ASSPSSANPAS. Disordered regions lie at residues 93-118 and 157-182; these read ASSP…MADK and TKLQ…LPRQ. The segment covering 160–172 has biased composition (polar residues); that stretch reads QRQTTEPASSTRH. Serine 217 carries the post-translational modification Phosphoserine. 2 C2 domains span residues 230 to 351 and 362 to 495; these read SCGK…SIWK and DLGE…AHWH. The Ca(2+) site is built by aspartate 261, aspartate 267, aspartate 319, phenylalanine 320, aspartate 321, serine 324, aspartate 327, aspartate 393, aspartate 399, aspartate 453, and aspartate 455. Residues 483–511 are necessary for cell membrane association (isoform 2); it reads MLAYPRKPIAHWHCLAEVKKSFKEGTPRL.

The protein belongs to the synaptotagmin family. In terms of assembly, isoform 1: Homodimer; disulfide-linked via the cysteine motif. Isoform 1: Can also form heterodimers with SYT3, SYT7, SYT9 and SYT10. Isoform 1: Interacts with STX1A, STX1B and STX2; the interaction is Ca(2+)-dependent. Isoform 2: Is not able to form homodimer and heterodimers. Requires Ca(2+) as cofactor.

It is found in the cytoplasmic vesicle. It localises to the secretory vesicle. Its subcellular location is the synaptic vesicle membrane. The protein localises to the membrane. The protein resides in the cytoplasm. It is found in the cytosol. It localises to the cell membrane. Functionally, may be involved in Ca(2+)-dependent exocytosis of secretory vesicles through Ca(2+) and phospholipid binding to the C2 domain or may serve as Ca(2+) sensors in the process of vesicular trafficking and exocytosis. May mediate Ca(2+)-regulation of exocytosis in acrosomal reaction in sperm. This chain is Synaptotagmin-6 (Syt6), found in Rattus norvegicus (Rat).